A 356-amino-acid chain; its full sequence is 3-isopropylmalate dehydrogenase (356 aa).

Arg91, Arg101, Arg129, and Asp223 together coordinate substrate. 3 residues coordinate Mg(2+): Asp223, Asp247, and Asp251. Gly281–Asn293 provides a ligand contact to NAD(+).

Belongs to the isocitrate and isopropylmalate dehydrogenases family. LeuB type 1 subfamily. Homodimer. It depends on Mg(2+) as a cofactor. Mn(2+) serves as cofactor.

It is found in the cytoplasm. It catalyses the reaction (2R,3S)-3-isopropylmalate + NAD(+) = 4-methyl-2-oxopentanoate + CO2 + NADH. The protein operates within amino-acid biosynthesis; L-leucine biosynthesis; L-leucine from 3-methyl-2-oxobutanoate: step 3/4. Functionally, catalyzes the oxidation of 3-carboxy-2-hydroxy-4-methylpentanoate (3-isopropylmalate) to 3-carboxy-4-methyl-2-oxopentanoate. The product decarboxylates to 4-methyl-2 oxopentanoate. This Ralstonia nicotianae (strain ATCC BAA-1114 / GMI1000) (Ralstonia solanacearum) protein is 3-isopropylmalate dehydrogenase.